The sequence spans 345 residues: S-adenosylmethionine:tRNA ribosyltransferase-isomerase (345 aa).

It belongs to the QueA family. As to quaternary structure, monomer.

It is found in the cytoplasm. The enzyme catalyses 7-aminomethyl-7-carbaguanosine(34) in tRNA + S-adenosyl-L-methionine = epoxyqueuosine(34) in tRNA + adenine + L-methionine + 2 H(+). It functions in the pathway tRNA modification; tRNA-queuosine biosynthesis. Functionally, transfers and isomerizes the ribose moiety from AdoMet to the 7-aminomethyl group of 7-deazaguanine (preQ1-tRNA) to give epoxyqueuosine (oQ-tRNA). The polypeptide is S-adenosylmethionine:tRNA ribosyltransferase-isomerase (Azoarcus sp. (strain BH72)).